The following is a 118-amino-acid chain: Small ribosomal subunit protein bS6 (118 aa).

It belongs to the bacterial ribosomal protein bS6 family.

Functionally, binds together with bS18 to 16S ribosomal RNA. This Saccharopolyspora erythraea (strain ATCC 11635 / DSM 40517 / JCM 4748 / NBRC 13426 / NCIMB 8594 / NRRL 2338) protein is Small ribosomal subunit protein bS6.